The primary structure comprises 116 residues: MKYCLRMAVEGALTELFNIHGLNLQNQCVQIIQQWKNENYLGMVQSGSLMIEEFHDNAFALLLFIEIRAVALLEAVVEHLENRLQFDLAVIFHQHSGGDRCHLRDLRIQILADRLD.

This Human adenovirus A serotype 12 (HAdV-12) protein is Probable early E4 11 kDa protein.